The following is a 380-amino-acid chain: MAPNLRKSHPLLKMVNNSLIDLPVPSNISAWWNFGSLLTICLLTQILTGLLLAMHYTADTTLAFSSVAHTCRNVQYGWLIRNLHANGASFFFICIYLHIGRGLYYGSYLYKETWNTGVILLLTLMATAFVGYVLPWGQMSFWGATVITNLFSAIPYIGQTLVEWAWGGFSVDNPTLTRFFALHFLLPFMIVGLSMIHLTFLHESGSNNPLGIVSDCDKIPFHPYFSLKDILGFILMLLPLTTLALFSPNLLGDPENFTPANPLITPPHIKPEWYFLFAYAILRSIPNKLGGVLALAASVLILFLAPFLHKAKQRTMTFRPISQLLFWILVANLLILTWVGSQPVEHPFIIIGQLASITYFTILLILFPIVGALENKMLNY.

A run of 4 helical transmembrane segments spans residues 34-54, 78-99, 114-134, and 179-199; these read FGSL…LLAM, WLIR…YLHI, WNTG…GYVL, and FFAL…IHLT. 2 residues coordinate heme b: His84 and His98. The heme b site is built by His183 and His197. An a ubiquinone-binding site is contributed by His202. A run of 4 helical transmembrane segments spans residues 227-247, 289-309, 321-341, and 348-368; these read LKDI…ALFS, LGGV…PFLH, ISQL…WVGS, and FIII…ILFP.

This sequence belongs to the cytochrome b family. In terms of assembly, the cytochrome bc1 complex contains 11 subunits: 3 respiratory subunits (MT-CYB, CYC1 and UQCRFS1), 2 core proteins (UQCRC1 and UQCRC2) and 6 low-molecular weight proteins (UQCRH/QCR6, UQCRB/QCR7, UQCRQ/QCR8, UQCR10/QCR9, UQCR11/QCR10 and a cleavage product of UQCRFS1). This cytochrome bc1 complex then forms a dimer. Requires heme b as cofactor.

Its subcellular location is the mitochondrion inner membrane. Component of the ubiquinol-cytochrome c reductase complex (complex III or cytochrome b-c1 complex) that is part of the mitochondrial respiratory chain. The b-c1 complex mediates electron transfer from ubiquinol to cytochrome c. Contributes to the generation of a proton gradient across the mitochondrial membrane that is then used for ATP synthesis. This is Cytochrome b (MT-CYB) from Pelecanoides garnotii (Peruvian diving petrel).